The chain runs to 247 residues: UPF0280 protein Mevan_0550 (247 aa).

The protein belongs to the UPF0280 family.

The polypeptide is UPF0280 protein Mevan_0550 (Methanococcus vannielii (strain ATCC 35089 / DSM 1224 / JCM 13029 / OCM 148 / SB)).